Consider the following 312-residue polypeptide: Bifunctional pinoresinol-lariciresinol reductase 1 (312 aa).

Residues 10–16, Arg-35, and Lys-44 each bind NADP(+); that span reads GGTGYIG. Lys-136 (proton acceptor) is an active-site residue. Arg-140 contacts NADP(+). His-268 contributes to the substrate binding site.

The protein belongs to the NmrA-type oxidoreductase family. Isoflavone reductase subfamily. As to quaternary structure, dimer. As to expression, expressed in seeds and roots, but not in stems. Detected in leaves.

The enzyme catalyses (-)-lariciresinol + NADP(+) = (-)-pinoresinol + NADPH + H(+). The catalysed reaction is (+)-secoisolariciresinol + NADP(+) = (-)-lariciresinol + NADPH + H(+). Its function is as follows. Reductase involved in lignan biosynthesis. Catalyzes the enantioselective conversion of (-)-pinoresinol into (-)-lariciresinol and of (-)-lariciresinol into (+)-secoisolariciresinol. Abstracts the 4R-hydride from the NADPH cofactor during catalysis. In Linum usitatissimum (Flax), this protein is Bifunctional pinoresinol-lariciresinol reductase 1 (PLR_Lu1).